A 270-amino-acid chain; its full sequence is MFLAGSFIVLCGLLAQSTAQLAGLPYPLGQDLPMSMGHCRSLHVGQTLPYYGVTPVVSTYPSDHLDRNFRDAFRHGLLSGGILSFLEHIPLLNYVRPTGSNAGGLVGVLGKVISSIPLLNNILDIRVTNPQLLEIGLVQSYDFHRLYVTIPLGFDLRVNTLVVGSLLELSVKLDVTAEVYAVRDSYGRSRLVIGDCIYPPGSLRISLLNRLGPLQNLIDSLTDILTRVIPGLVQGVVCPLVNGVLSLLDVTLAHDVADALLRGVQFVIKT.

Positions 1–19 (MFLAGSFIVLCGLLAQSTA) are cleaved as a signal peptide. The cysteines at positions 196 and 238 are disulfide-linked.

The protein belongs to the BPI/LBP/Plunc superfamily. Plunc family. Expressed in interpapillar epithelium of the anterior part of the tongue.

It localises to the secreted. May play a role in innate immunity in the oral cavity. The chain is BPI fold-containing family A member 5 (Bpifa5) from Mus musculus (Mouse).